Consider the following 80-residue polypeptide: Protein P9 (80 aa).

Self-associates.

The protein is Protein P9 of Beta vulgaris (Sugar beet).